The sequence spans 434 residues: Serine hydroxymethyltransferase (434 aa).

(6S)-5,6,7,8-tetrahydrofolate is bound by residues L133 and 137–139 (GHL). K242 carries the N6-(pyridoxal phosphate)lysine modification. 366–368 (SPF) contacts (6S)-5,6,7,8-tetrahydrofolate.

It belongs to the SHMT family. In terms of assembly, homodimer. Requires pyridoxal 5'-phosphate as cofactor.

It localises to the cytoplasm. The catalysed reaction is (6R)-5,10-methylene-5,6,7,8-tetrahydrofolate + glycine + H2O = (6S)-5,6,7,8-tetrahydrofolate + L-serine. Its pathway is one-carbon metabolism; tetrahydrofolate interconversion. It functions in the pathway amino-acid biosynthesis; glycine biosynthesis; glycine from L-serine: step 1/1. Functionally, catalyzes the reversible interconversion of serine and glycine with tetrahydrofolate (THF) serving as the one-carbon carrier. This reaction serves as the major source of one-carbon groups required for the biosynthesis of purines, thymidylate, methionine, and other important biomolecules. Also exhibits THF-independent aldolase activity toward beta-hydroxyamino acids, producing glycine and aldehydes, via a retro-aldol mechanism. The protein is Serine hydroxymethyltransferase of Erythrobacter litoralis (strain HTCC2594).